The chain runs to 72 residues: Protein LITTLE ZIPPER 4 (72 aa).

A coiled-coil region spans residues 14 to 44 (YIIKENERLRKKAQILNQENQQLLFELKQKL). A disordered region spans residues 42–72 (QKLSKTKNSSGSNQGNNNNNNNLSSSSSASG). Over residues 49–72 (NSSGSNQGNNNNNNNLSSSSSASG) the composition is skewed to low complexity.

As to quaternary structure, interacts with REV.

In terms of biological role, competitive inhibitor of the HD-ZIPIII transcription factors in shoot apical meristem (SAM) development. Acts by forming non-functional heterodimers. Part of a negative feedback loop. Essential for proper functioning of stem cells in the SAM. The chain is Protein LITTLE ZIPPER 4 from Arabidopsis thaliana (Mouse-ear cress).